We begin with the raw amino-acid sequence, 488 residues long: Glutamyl-tRNA(Gln) amidotransferase subunit A (488 aa).

Residues Lys77 and Ser152 each act as charge relay system in the active site. Ser176 serves as the catalytic Acyl-ester intermediate.

Belongs to the amidase family. GatA subfamily. Heterotrimer of A, B and C subunits.

It catalyses the reaction L-glutamyl-tRNA(Gln) + L-glutamine + ATP + H2O = L-glutaminyl-tRNA(Gln) + L-glutamate + ADP + phosphate + H(+). Functionally, allows the formation of correctly charged Gln-tRNA(Gln) through the transamidation of misacylated Glu-tRNA(Gln) in organisms which lack glutaminyl-tRNA synthetase. The reaction takes place in the presence of glutamine and ATP through an activated gamma-phospho-Glu-tRNA(Gln). The sequence is that of Glutamyl-tRNA(Gln) amidotransferase subunit A from Streptococcus uberis (strain ATCC BAA-854 / 0140J).